The primary structure comprises 207 residues: MSGRPKLVLASGSPRRLSLLNQAGIEPDALRPVDIDETPTKGELPRACANRLARAKADAALRALQIDDELRGSFILAADTVVAVGRRILPKADLVDEASQCLRLLSGRNHRVYTAVCLVTPKENFRQRLVETRVRFKRLSEEDIQAYIGSGEWRGKAGGYAIQGIAGSFVVKLVGSYTNVVGLPLNESIALLGGEEFPIRAGWLDAG.

The Proton acceptor role is filled by Asp79.

This sequence belongs to the Maf family. YhdE subfamily. The cofactor is a divalent metal cation.

It is found in the cytoplasm. It carries out the reaction dTTP + H2O = dTMP + diphosphate + H(+). The catalysed reaction is UTP + H2O = UMP + diphosphate + H(+). Functionally, nucleoside triphosphate pyrophosphatase that hydrolyzes dTTP and UTP. May have a dual role in cell division arrest and in preventing the incorporation of modified nucleotides into cellular nucleic acids. The protein is dTTP/UTP pyrophosphatase of Nitrobacter winogradskyi (strain ATCC 25391 / DSM 10237 / CIP 104748 / NCIMB 11846 / Nb-255).